Reading from the N-terminus, the 85-residue chain is N.vectensis toxin 6 (85 aa).

The signal sequence occupies residues 1-20 (MISFKTVIVCLFLWVVIIGA). Disulfide bonds link C46-C82, C48-C71, and C64-C83.

Functionally, probable toxin. The sequence is that of N.vectensis toxin 6 from Nematostella vectensis (Starlet sea anemone).